The primary structure comprises 296 residues: GTPase Era (296 aa).

The Era-type G domain maps to 7–174 (RTGFVAVVGR…LDEIAARLPE (168 aa)). Positions 15–22 (GRPNVGKS) are G1. Residue 15-22 (GRPNVGKS) participates in GTP binding. Residues 41–45 (QTTRH) are G2. Residues 62–65 (DTPG) are G3. Residues 62–66 (DTPGF) and 123–126 (SKID) each bind GTP. The segment at 123 to 126 (SKID) is G4. The G5 stretch occupies residues 153 to 155 (VSA). Residues 205–281 (VGDELPYGCT…HLEVYIKVRK (77 aa)) enclose the KH type-2 domain.

Belongs to the TRAFAC class TrmE-Era-EngA-EngB-Septin-like GTPase superfamily. Era GTPase family. In terms of assembly, monomer.

The protein localises to the cytoplasm. The protein resides in the cell inner membrane. Its function is as follows. An essential GTPase that binds both GDP and GTP, with rapid nucleotide exchange. Plays a role in 16S rRNA processing and 30S ribosomal subunit biogenesis and possibly also in cell cycle regulation and energy metabolism. The sequence is that of GTPase Era from Bordetella petrii (strain ATCC BAA-461 / DSM 12804 / CCUG 43448).